Reading from the N-terminus, the 150-residue chain is Large ribosomal subunit protein bL9 (150 aa).

It belongs to the bacterial ribosomal protein bL9 family.

Functionally, binds to the 23S rRNA. This chain is Large ribosomal subunit protein bL9, found in Burkholderia multivorans (strain ATCC 17616 / 249).